A 71-amino-acid polypeptide reads, in one-letter code: SRY-related protein LG27 (71 aa).

Positions 1-68 (VKRPMNAFMV…KHMADYPNYK (68 aa)) form a DNA-binding region, HMG box.

The protein resides in the nucleus. The sequence is that of SRY-related protein LG27 from Eublepharis macularius (Leopard gecko).